Reading from the N-terminus, the 110-residue chain is UPF0251 protein PH0803 (110 aa).

The protein belongs to the UPF0251 family.

The sequence is that of UPF0251 protein PH0803 from Pyrococcus horikoshii (strain ATCC 700860 / DSM 12428 / JCM 9974 / NBRC 100139 / OT-3).